We begin with the raw amino-acid sequence, 448 residues long: Probable glycine dehydrogenase (decarboxylating) subunit 1 (448 aa).

The protein belongs to the GcvP family. N-terminal subunit subfamily. The glycine cleavage system is composed of four proteins: P, T, L and H. In this organism, the P 'protein' is a heterodimer of two subunits.

The catalysed reaction is N(6)-[(R)-lipoyl]-L-lysyl-[glycine-cleavage complex H protein] + glycine + H(+) = N(6)-[(R)-S(8)-aminomethyldihydrolipoyl]-L-lysyl-[glycine-cleavage complex H protein] + CO2. Functionally, the glycine cleavage system catalyzes the degradation of glycine. The P protein binds the alpha-amino group of glycine through its pyridoxal phosphate cofactor; CO(2) is released and the remaining methylamine moiety is then transferred to the lipoamide cofactor of the H protein. This is Probable glycine dehydrogenase (decarboxylating) subunit 1 from Staphylococcus carnosus (strain TM300).